We begin with the raw amino-acid sequence, 429 residues long: Probable M18 family aminopeptidase 2 (429 aa).

Residues His-82, His-156, and His-401 each contribute to the Zn(2+) site.

Belongs to the peptidase M18 family. Zn(2+) serves as cofactor.

This Pseudomonas entomophila (strain L48) protein is Probable M18 family aminopeptidase 2.